The sequence spans 977 residues: Serine/threonine-protein kinase N2 (977 aa).

3 REM-1 domains span residues 24–100, 114–194, and 200–280; these read NLDF…HIVV, DTPK…TSEI, and DVTT…ELPK. Residues 298 to 468 form the C2 domain; that stretch reads PPNSPRQSIM…LYLEPQGTLF (171 aa). Disordered regions lie at residues 342–381 and 531–576; these read GRSKTASVSLPGWSPSEARSSFMSRGNKNKSGSSRTLSKS and AADL…KRNS. Positions 358–378 are enriched in polar residues; that stretch reads EARSSFMSRGNKNKSGSSRTL. Residues 650–909 enclose the Protein kinase domain; sequence FKCVAVLGRG…AEEVKRHPFF (260 aa). Residues 656–664 and Lys-679 each bind ATP; that span reads LGRGHFGKV. The active-site Proton acceptor is Asp-775. An AGC-kinase C-terminal domain is found at 910–977; sequence RDMDWPGLLA…ADFDYIADWC (68 aa).

Belongs to the protein kinase superfamily. AGC Ser/Thr protein kinase family. PKC subfamily. In terms of processing, autophosphorylated. Phosphorylated. Post-translationally, proteolytically cleaved.

The protein localises to the cytoplasm. The protein resides in the nucleus. It localises to the membrane. Its subcellular location is the cell projection. It is found in the lamellipodium. The protein localises to the cytoskeleton. The protein resides in the cleavage furrow. It localises to the midbody. Its subcellular location is the cell junction. It catalyses the reaction L-seryl-[protein] + ATP = O-phospho-L-seryl-[protein] + ADP + H(+). It carries out the reaction L-threonyl-[protein] + ATP = O-phospho-L-threonyl-[protein] + ADP + H(+). Its activity is regulated as follows. Kinase activity is activated upon binding to GTP-bound Rho/Rac GTPases. Activated by lipids, particularly cardiolipin and to a lesser extent by other acidic phospholipids and unsaturated fatty acids. Two specific sites, Thr-809 (activation loop of the kinase domain) and Thr-951 (turn motif), may be needed to be phosphorylated for its full activation. Its function is as follows. Pkc-related serine/threonine-protein kinase and Rho/Rac effector protein that participates in specific signal transduction responses in the cell. May play a role in the regulation of cell cycle progression, actin cytoskeleton assembly, cell migration, cell adhesion and transcription activation signaling processes. In Danio rerio (Zebrafish), this protein is Serine/threonine-protein kinase N2 (pkn2).